The following is a 378-amino-acid chain: Ferrochelatase (378 aa).

2 residues coordinate Fe cation: histidine 214 and glutamate 295.

The protein belongs to the ferrochelatase family.

The protein resides in the cytoplasm. The catalysed reaction is heme b + 2 H(+) = protoporphyrin IX + Fe(2+). Its pathway is porphyrin-containing compound metabolism; protoheme biosynthesis; protoheme from protoporphyrin-IX: step 1/1. In terms of biological role, catalyzes the ferrous insertion into protoporphyrin IX. The chain is Ferrochelatase from Hydrogenovibrio crunogenus (strain DSM 25203 / XCL-2) (Thiomicrospira crunogena).